Here is a 635-residue protein sequence, read N- to C-terminus: Rab11 family-interacting protein 4 (635 aa).

Residues 49-84 enclose the EF-hand domain; it reads GQGEEVEKLVKCLDPNDLGRINFKDFCRGVFAMKGC. Residues aspartate 62, asparagine 64, arginine 68, and aspartate 73 each coordinate Ca(2+). A necessary for interaction with RAB11A, subcellular location, homo- or heterooligomerization region spans residues 82 to 635; the sequence is KGCEELLKDV…HNPSILEIKH (554 aa). 2 disordered regions span residues 147–176 and 216–258; these read GPQE…EKEP and EDYG…QTPR. Residues 216–225 are compositionally biased toward acidic residues; the sequence is EDYGEGDDVD. Residues 279-615 are a coiled coil; that stretch reads KINLLNDLEA…EEINFRLRQY (337 aa). In terms of domain architecture, FIP-RBD spans 572-634; that stretch reads EAKNLFATQT…DHNPSILEIK (63 aa).

In terms of assembly, homodimer. Forms a complex with Rab11 (RAB11A or RAB11B) and ARF6. Interacts with RAB11A; the interaction is direct. Forms a heterooligomeric complex with RAB11FIP2, RAB11FIP3 and RAB11FIP5. Interacts with ECPAS. In terms of tissue distribution, strongly expressed in the developing retina. Expressed predominantly in neural tissues.

Its subcellular location is the recycling endosome membrane. It localises to the cleavage furrow. It is found in the midbody. The protein resides in the cytoplasmic vesicle. Acts as a regulator of endocytic traffic by participating in membrane delivery. Required for the abscission step in cytokinesis, possibly by acting as an 'address tag' delivering recycling endosome membranes to the cleavage furrow during late cytokinesis. May play a role in differentiation during retinal development, in a Rab11-independent manner. This chain is Rab11 family-interacting protein 4 (Rab11fip4), found in Mus musculus (Mouse).